We begin with the raw amino-acid sequence, 293 residues long: Digeranylgeranylglyceryl phosphate synthase (293 aa).

A run of 7 helical transmembrane segments spans residues 26-46, 50-70, 107-127, 140-160, 215-235, 237-257, and 273-293; these read LMYG…FSDL, LLGY…NDYF, FVAA…VSVL, FAGN…GSII, IASL…FLLP, FLFD…LIYV, and YRKV…AGAF.

Belongs to the UbiA prenyltransferase family. DGGGP synthase subfamily. Requires Mg(2+) as cofactor.

The protein localises to the cell membrane. It catalyses the reaction sn-3-O-(geranylgeranyl)glycerol 1-phosphate + (2E,6E,10E)-geranylgeranyl diphosphate = 2,3-bis-O-(geranylgeranyl)-sn-glycerol 1-phosphate + diphosphate. The protein operates within membrane lipid metabolism; glycerophospholipid metabolism. Its function is as follows. Prenyltransferase that catalyzes the transfer of the geranylgeranyl moiety of geranylgeranyl diphosphate (GGPP) to the C2 hydroxyl of (S)-3-O-geranylgeranylglyceryl phosphate (GGGP). This reaction is the second ether-bond-formation step in the biosynthesis of archaeal membrane lipids. This Archaeoglobus fulgidus (strain ATCC 49558 / DSM 4304 / JCM 9628 / NBRC 100126 / VC-16) protein is Digeranylgeranylglyceryl phosphate synthase.